A 1099-amino-acid polypeptide reads, in one-letter code: MPKREDIKRILVIGSGPITIGQAAEFDYSGTQALKALKSAGYEVIIVNSNSATIMTDPEFSDAVYIEPLTVEFLEKIIEKERPDALLPTLGGQTALNLAVELAERGILDKYGVQLIGAKLESIKKAEDRELFKETMEKAGLEVLRSRLVNNLADALETAREFGYPVIIRPSFTLGGTGGGIAFNEEELRDIVTKGLIESPVHTVLIEESVLGWKEYELEVVRDGAGNFIVVCSIENLDPMGIHTGDSITVAPAQTLTDVEYQRMRDAAYKVIDAIGIETGGSNIQFALDPETGRMVVIEMNPRVSRSSALASKATGYPIAKVAALLAVGFTLDEIPNYITGKTMAAFEPSIDYVVVKIPRFQLEKFPGADPRLNTQMKSVGEVMAIGRTFKEALGKALRSLELDAAPKLDLEHIREHLANPTPERISYVFAAFRNGMDVEEVHELTKIDRWFLREMKACIELEEELKLKKFDVEILKKAKQWGYSDREIAEIWGVSEKEIRKMREDNRIFPVYKMVDTCAAEFEAQTPYYYSTYNGVENEAVPSDREKIMILGSGPNRIGQGIEFDYTNVHGVWSFQEEGYETIMVNSNPETVSTDYDTSDRLYFEPLTVEDVLEIVRNEKPKGVVVAFGGQTPLKIAKYLVEERVNIIGTSFESIEIAEDREKFAKLLKQIGLKCPPFGTASSVEEALRVAENLGYPVLVRPSYVLGGRAMAIVDTPQELEMYVKEAAVVSPGYPVLIDKFLEDAIELDVDVVSDGKYVWIAGLMEQIEEAGVHSGDSACVLPPVSLSEKLVEEIEETVYKLVKALKVVGVANIQLAVKDEEIYIIEANPRASRTVPFVSKAIGIPVARIAAKIMVGRNLPELLSEYFPYPTRPGVKVDKLGESEILPTPWPKMFSVKEVVIPFHKFPGTDVLLGPEMRSTGEVMGIGEDFAEAFAKAQIAAGNPLPTTGAILATVADKDKREAVPLLAHLADMGFEIYATRGTAKALQSHGVEVKVVPKVGEGRPDVIDLLEQGKISLVVITQSSDEPALVAVSHGKEPFKVEGRRTVGYMIRTTALKRKIPYLTTVESLRAAVAAIRKMKKGSIVKVRRLTDTWKM.

Residues 1–402 (MPKREDIKRI…ALGKALRSLE (402 aa)) are carboxyphosphate synthetic domain. ATP is bound by residues Arg129, Arg169, Gly175, Gly176, Glu208, Val210, Glu215, Gly241, Ile242, His243, Gln285, and Glu299. An ATP-grasp 1 domain is found at 133 to 328 (KETMEKAGLE…IAKVAALLAV (196 aa)). Mg(2+) contacts are provided by Gln285, Glu299, and Asn301. Mn(2+) is bound by residues Gln285, Glu299, and Asn301. Residues 403–541 (LDAAPKLDLE…STYNGVENEA (139 aa)) form an oligomerization domain region. The segment at 542–944 (VPSDREKIMI…AFAKAQIAAG (403 aa)) is carbamoyl phosphate synthetic domain. Residues 666–857 (AKLLKQIGLK…VARIAAKIMV (192 aa)) enclose the ATP-grasp 2 domain. Positions 702, 741, 743, 748, 773, 774, 775, 776, 816, and 828 each coordinate ATP. The Mg(2+) site is built by Gln816, Glu828, and Asn830. Positions 816, 828, and 830 each coordinate Mn(2+). The 155-residue stretch at 945–1099 (NPLPTTGAIL…VRRLTDTWKM (155 aa)) folds into the MGS-like domain. Residues 945 to 1099 (NPLPTTGAIL…VRRLTDTWKM (155 aa)) are allosteric domain.

It belongs to the CarB family. In terms of assembly, composed of two chains; the small (or glutamine) chain promotes the hydrolysis of glutamine to ammonia, which is used by the large (or ammonia) chain to synthesize carbamoyl phosphate. Tetramer of heterodimers (alpha,beta)4. Mg(2+) is required as a cofactor. Requires Mn(2+) as cofactor.

It carries out the reaction hydrogencarbonate + L-glutamine + 2 ATP + H2O = carbamoyl phosphate + L-glutamate + 2 ADP + phosphate + 2 H(+). The enzyme catalyses hydrogencarbonate + NH4(+) + 2 ATP = carbamoyl phosphate + 2 ADP + phosphate + 2 H(+). The protein operates within amino-acid biosynthesis; L-arginine biosynthesis; carbamoyl phosphate from bicarbonate: step 1/1. It participates in pyrimidine metabolism; UMP biosynthesis via de novo pathway; (S)-dihydroorotate from bicarbonate: step 1/3. Functionally, large subunit of the glutamine-dependent carbamoyl phosphate synthetase (CPSase). CPSase catalyzes the formation of carbamoyl phosphate from the ammonia moiety of glutamine, carbonate, and phosphate donated by ATP, constituting the first step of 2 biosynthetic pathways, one leading to arginine and/or urea and the other to pyrimidine nucleotides. The large subunit (synthetase) binds the substrates ammonia (free or transferred from glutamine from the small subunit), hydrogencarbonate and ATP and carries out an ATP-coupled ligase reaction, activating hydrogencarbonate by forming carboxy phosphate which reacts with ammonia to form carbamoyl phosphate. This is Carbamoyl phosphate synthase large chain from Thermotoga maritima (strain ATCC 43589 / DSM 3109 / JCM 10099 / NBRC 100826 / MSB8).